A 609-amino-acid polypeptide reads, in one-letter code: UvrABC system protein C (609 aa).

The GIY-YIG domain maps to 16–94; the sequence is SSAGVYRMYD…IKQYMPKYNV (79 aa). In terms of domain architecture, UVR spans 203–238; the sequence is KQVISELVAKMEEAAGQQAYEQAARFRDQIMALRRV.

The protein belongs to the UvrC family. As to quaternary structure, interacts with UvrB in an incision complex.

It localises to the cytoplasm. The UvrABC repair system catalyzes the recognition and processing of DNA lesions. UvrC both incises the 5' and 3' sides of the lesion. The N-terminal half is responsible for the 3' incision and the C-terminal half is responsible for the 5' incision. The sequence is that of UvrABC system protein C from Shewanella sp. (strain ANA-3).